The sequence spans 208 residues: Large ribosomal subunit protein uL3 (208 aa).

The tract at residues 117–149 (GFQGAIKRHGQSRGPMAHGSRYHRRPGSMGPVA) is disordered.

It belongs to the universal ribosomal protein uL3 family. In terms of assembly, part of the 50S ribosomal subunit. Forms a cluster with proteins L14 and L19.

Functionally, one of the primary rRNA binding proteins, it binds directly near the 3'-end of the 23S rRNA, where it nucleates assembly of the 50S subunit. The sequence is that of Large ribosomal subunit protein uL3 from Exiguobacterium sp. (strain ATCC BAA-1283 / AT1b).